The sequence spans 983 residues: GPI ethanolamine phosphate transferase 2, catalytic subunit (983 aa).

Over 1–431 the chain is Lumenal; sequence MRLGSGTFAT…SLSAQVAQYD (431 aa). N-linked (GlcNAc...) asparagine glycosylation occurs at Asn194. The next 12 membrane-spanning stretches (helical) occupy residues 432-452, 471-491, 506-526, 552-572, 699-719, 721-741, 752-772, 789-809, 812-832, 879-899, 919-939, and 955-975; these read IYSM…LLLS, GFSL…VIVC, LAAG…VSVL, LLIL…SFVE, VLAA…CSPV, KAAL…IGSV, ISKG…ILFT, LKTV…ALLF, HNLP…KFIW, VEIP…VLWA, ACFC…VLVT, and LLYE…FTAM.

Belongs to the PIGG/PIGN/PIGO family. PIGG subfamily. As to quaternary structure, part of the ethanolamine phosphate transferase 2 complex composed by PIGG and PIGF. PIGF is required to stabilize it. Competes with PIGO for the binding of PIGF.

The protein resides in the endoplasmic reticulum membrane. Its pathway is glycolipid biosynthesis; glycosylphosphatidylinositol-anchor biosynthesis. Its function is as follows. Catalytic subunit of the ethanolamine phosphate transferase 2 complex that transfers an ethanolamine phosphate (EtNP) from a phosphatidylethanolamine (PE) to the 6-OH position of the second alpha-1,6-linked mannose of a 6-PEtn-alpha-D-Man-(1-&gt;2)-alpha-D-Man-(1-&gt;6)-2-PEtn-alpha-D-Man-(1-&gt;4)-alpha-D-GlcN-(1-&gt;6)-(1-radyl,2-acyl-sn-glycero-3-phospho)-2-acyl-inositol (also termed H7) intermediate to generate a 6-PEtn-alpha-D-Man-(1-&gt;2)-6-PEtn-alpha-D-Man-(1-&gt;6)-2-PEtn-alpha-D-Man-(1-&gt;4)-alpha-D-GlcN-(1-&gt;6)-(1-radyl,2-acyl-sn-glycero-3-phospho)-2-acyl-inositol (also termed H8) and participates in the eleventh step of the glycosylphosphatidylinositol-anchor biosynthesis. The chain is GPI ethanolamine phosphate transferase 2, catalytic subunit from Homo sapiens (Human).